Reading from the N-terminus, the 155-residue chain is Small ribosomal subunit protein bS16 (155 aa).

Positions 113-155 (ADGAPTGEAIQQKKKKAPKKAEAAEAEAPAEEPAAESADAASE) are disordered. Residues 136-146 (AEAEAPAEEPA) are compositionally biased toward acidic residues.

It belongs to the bacterial ribosomal protein bS16 family.

This Mycobacteroides abscessus (strain ATCC 19977 / DSM 44196 / CCUG 20993 / CIP 104536 / JCM 13569 / NCTC 13031 / TMC 1543 / L948) (Mycobacterium abscessus) protein is Small ribosomal subunit protein bS16.